The primary structure comprises 144 residues: MKSYIAKPHEVERKWYIVDAADKPLGRVASQVASILRGKHKPTYTPHVDTGDNVIVINVEKVVLTGKKLDQKLLRHHSLYPGGLKEIPYREAIAKKPEFVFEEAVRRMLPSGVLGRKMLKKLKVYKGAEHNQEAQKPEVLELRY.

This sequence belongs to the universal ribosomal protein uL13 family. As to quaternary structure, part of the 50S ribosomal subunit.

Its function is as follows. This protein is one of the early assembly proteins of the 50S ribosomal subunit, although it is not seen to bind rRNA by itself. It is important during the early stages of 50S assembly. The protein is Large ribosomal subunit protein uL13 of Clostridium botulinum (strain ATCC 19397 / Type A).